The primary structure comprises 404 residues: Mitochondrial potassium channel (404 aa).

A mitochondrion-targeting transit peptide spans 1–30 (MTGRSRVLAMRHVGGVSPVLVRRDLFLTRT). Over 31–196 (LCSHGPSQPR…KERTRAERTK (166 aa)) the chain is Mitochondrial matrix. S65 carries the post-translational modification Phosphoserine. The stretch at 111-138 (VREAREDLESQQTKLKEVRDRLDRISRD) forms a coiled coil. The helical transmembrane segment at 197–217 (NWSLIGSVLGALIGVAGSTYV) threads the bilayer. Over 218–380 (NRVRLQELKA…LEAQVNRNTV (163 aa)) the chain is Mitochondrial intermembrane. Residues 381–401 (YGTLVTCATFVAVLPVLYMLF) form a helical membrane-spanning segment. Residues 402–404 (RAS) are Mitochondrial matrix-facing.

As to quaternary structure, the mitochondrial potassium channel (mitoK(ATP)) forms a heteromultimer.

It localises to the mitochondrion inner membrane. It carries out the reaction K(+)(in) = K(+)(out). With respect to regulation, channel activity inhibited by ATP via ABCB8/MITOSUR subunit. In terms of biological role, pore-forming subunit of the mitochondrial ATP-gated potassium channel (mitoK(ATP)). Together with ATP-binding subunit ABCB8/MITOSUR of the mitoK(ATP) channel, mediates ATP-dependent K(+) currents across the mitochondrial inner membrane. An increase in ATP intracellular levels closes the channel, inhibiting K(+) transport, whereas a decrease in ATP levels enhances K(+) uptake in the mitochondrial matrix. May contribute to the homeostatic control of cellular metabolism under stress conditions by regulating the mitochondrial matrix volume. This chain is Mitochondrial potassium channel, found in Bos taurus (Bovine).